The sequence spans 392 residues: S-adenosylmethionine synthase (392 aa).

His17 lines the ATP pocket. Asp19 provides a ligand contact to Mg(2+). Glu45 contacts K(+). Positions 58 and 102 each coordinate L-methionine. Residues 102 to 112 are flexible loop; it reads QSADIAQGVDA. ATP contacts are provided by residues 169–171, 235–236, Asp244, 250–251, Ala267, and Lys271; these read DAK, KF, and RK. L-methionine is bound at residue Asp244. Lys275 is an L-methionine binding site.

This sequence belongs to the AdoMet synthase family. As to quaternary structure, homotetramer; dimer of dimers. Requires Mg(2+) as cofactor. It depends on K(+) as a cofactor.

It localises to the cytoplasm. The enzyme catalyses L-methionine + ATP + H2O = S-adenosyl-L-methionine + phosphate + diphosphate. It participates in amino-acid biosynthesis; S-adenosyl-L-methionine biosynthesis; S-adenosyl-L-methionine from L-methionine: step 1/1. Its function is as follows. Catalyzes the formation of S-adenosylmethionine (AdoMet) from methionine and ATP. The overall synthetic reaction is composed of two sequential steps, AdoMet formation and the subsequent tripolyphosphate hydrolysis which occurs prior to release of AdoMet from the enzyme. This chain is S-adenosylmethionine synthase, found in Methylobacterium sp. (strain 4-46).